A 498-amino-acid chain; its full sequence is MRINPTTSGPEVSTLEEKNLGRIAQIIGPVLDVAFPPGKMPNIYNALVVKGRDTVGQQINVTCEVQQLLGNNRVRAVAMSATDGLTRGMEVIDTRAPLSVPVGGATLGRIFNVLGEPVDNLGPVDTRTTSPIHRSAPAFIQLDTKLSIFETGIKVVDLLAPYRRGGKIGLFGGAGVGKTVLIMELINNIAKAHGGVSVFGGVGERTREGNDLYMEMKESGVINEQNIAESKVALVYGQMNEPPGARMRVGLTALTMAEYFRDVNEQDVLLFIDNIFRFVQAGSEVSALLGRMPSAVGYQPTLSTEMGSLQERITSTKEGSITSIQAVYVPADDLTDPAPATTFAHLDATTVLSRGLAAKGIYPAVDPLDSTSTMLQPRIVGEEHYETAQRVKQTLQRYKELQDIIAILGLDELSEEDRLTVARARKIERFLSQPFFVAEVFTGSPGKYVGLAETIRGFQLILSGELDGLPEQAFYLVGNIDEATAKAMNLEVESKLKK.

Position 172-179 (172-179 (GGAGVGKT)) interacts with ATP.

The protein belongs to the ATPase alpha/beta chains family. As to quaternary structure, F-type ATPases have 2 components, CF(1) - the catalytic core - and CF(0) - the membrane proton channel. CF(1) has five subunits: alpha(3), beta(3), gamma(1), delta(1), epsilon(1). CF(0) has four main subunits: a(1), b(1), b'(1) and c(9-12).

It is found in the plastid. Its subcellular location is the chloroplast thylakoid membrane. The catalysed reaction is ATP + H2O + 4 H(+)(in) = ADP + phosphate + 5 H(+)(out). Functionally, produces ATP from ADP in the presence of a proton gradient across the membrane. The catalytic sites are hosted primarily by the beta subunits. This is ATP synthase subunit beta, chloroplastic from Buxus microphylla (Littleleaf boxwood).